Here is a 338-residue protein sequence, read N- to C-terminus: Ferredoxin--NADP reductase (338 aa).

7 residues coordinate FAD: D38, Q46, Y51, V91, F125, D291, and T331.

It belongs to the ferredoxin--NADP reductase type 2 family. In terms of assembly, homodimer. It depends on FAD as a cofactor.

The enzyme catalyses 2 reduced [2Fe-2S]-[ferredoxin] + NADP(+) + H(+) = 2 oxidized [2Fe-2S]-[ferredoxin] + NADPH. The protein is Ferredoxin--NADP reductase of Orientia tsutsugamushi (strain Boryong) (Rickettsia tsutsugamushi).